Consider the following 227-residue polypeptide: MRITLPLLSTAVGLGLTAAVLGTGPAATAAAPQEPVRAAQLGYQPSAGSGEDAAANRAFFEAVVKSVAEKRAANPSAAAAVTVYYSATNAPSFRSQISRSAQIWNSSVSNVRLAESSSGADFAYYEGNDSRGSYASTDGHGSGYIFLDYRQNQQYDSTRVTAHETGHVLGLPDHYSGPCSELMSGGGPGPSCTNPYPNSTERSRVNQLWAYGFQAALDKALEKASQR.

A signal peptide spans Met1 to Ala29. Residues Ala30–Gly42 constitute a propeptide that is removed on maturation. 2 residues coordinate Ca(2+): Asp156 and Thr158. Residue His163 coordinates Zn(2+). The active site involves Glu164. Zn(2+) is bound by residues His167 and Asp173. Cysteines 179 and 192 form a disulfide.

The protein belongs to the peptidase M7 family. Requires Ca(2+) as cofactor. Zn(2+) is required as a cofactor. In terms of processing, the N-terminus is blocked.

It is found in the secreted. The enzyme catalyses Hydrolyzes proteins with a preference for Tyr or Phe in the P1' position. Has no action on amino-acid p-nitroanilides.. In Streptomyces lividans, this protein is Extracellular small neutral protease (snpA).